The chain runs to 89 residues: Small ribosomal subunit protein uS15 (89 aa).

This sequence belongs to the universal ribosomal protein uS15 family. As to quaternary structure, part of the 30S ribosomal subunit. Forms a bridge to the 50S subunit in the 70S ribosome, contacting the 23S rRNA.

In terms of biological role, one of the primary rRNA binding proteins, it binds directly to 16S rRNA where it helps nucleate assembly of the platform of the 30S subunit by binding and bridging several RNA helices of the 16S rRNA. Functionally, forms an intersubunit bridge (bridge B4) with the 23S rRNA of the 50S subunit in the ribosome. The sequence is that of Small ribosomal subunit protein uS15 from Azoarcus sp. (strain BH72).